Consider the following 5112-residue polypeptide: Malformin synthetase mlfA (5112 aa).

The interval 225-616 (ERHAANRPHS…CGRADTQVKL (392 aa)) is adenylation 1. The region spanning 757–830 (SRLEQEIQLA…EAASLAEVQE (74 aa)) is the Carrier 1 domain. An O-(pantetheine 4'-phosphoryl)serine modification is found at Ser791. The tract at residues 868-1299 (EDVFPCTTMQ…ALDSLTLLQA (432 aa)) is condensation 1. Positions 1327–1716 (DRRVTRQPDT…GRKDTQVKLR (390 aa)) are adenylation 2. The 78-residue stretch at 1854–1931 (TAASELERTL…QLAAELGESP (78 aa)) folds into the Carrier 2 domain. Ser1891 is subject to O-(pantetheine 4'-phosphoryl)serine. Disordered stretches follow at residues 1926-1961 (ELGE…DGVD) and 1994-2034 (GGSS…VPEP). Low complexity-rich tracts occupy residues 1930–1941 (SPRSSTSSASSS) and 1994–2012 (GGSS…SSSS). Positions 2064–2479 (EDIYPATALQ…AVSYSDKQTL (416 aa)) are condensation 2. Residues 2502 to 2894 (IRTPHAPAVC…IGRRDGQVKL (393 aa)) are adenylation 3. In terms of domain architecture, Carrier 3 spans 3030–3106 (RPTTAKECEM…QLLFHLRNAK (77 aa)). Ser3067 bears the O-(pantetheine 4'-phosphoryl)serine mark. Condensation regions lie at residues 3122-3586 (WVDL…TYEQ) and 3607-4044 (NIYP…EQLV). Residues 4069-4459 (HSSRQAVCAW…VGRKDNQIKF (391 aa)) are adenylation 4. Residues 4593–4669 (MPSTEAECIM…DLARHNSLVQ (77 aa)) enclose the Carrier 4 domain. O-(pantetheine 4'-phosphoryl)serine is present on Ser4630. The interval 4724 to 5106 (IVVDIPGRIS…VEKVVALLRD (383 aa)) is condensation 5.

The protein belongs to the NRP synthetase family.

The protein operates within secondary metabolite biosynthesis. Functionally, nonribosomal peptide synthetase; part of the gene cluster that mediates the biosynthesis of malformins, cyclic pentapeptides with a disulfide bond between 2 consecutive cysteins, that show potential anti-tumor as well as antimalarial and antitrypanosomal properties. The nonribosomal peptide synthetase mlfA is responsible of the formation of the cyclic pentapeptide. MlfA probably acts iteratively on one amino acid and possesses multiple amino acid specificities since it is involved in the biosynthesis of multiple malformins, including malformin C and malformin A2. Malformin C corresponds to a cyclo[D-Cys-D-Cys-Val-D-Leu-Val] pentapeptide whereas malformin A2 corresponds to a cyclo[D-Cys-D-Cys-Val-D-Leu-Ile] pentapeptide. The malformin biosynthesis clusters in malformin-producing fungi also contain enzymes involved in the formation of the disulfide bond between the two consecutive cysteins within malformins, in addition to additional tailoring enzymes such as methyltransferases or oxidoreductases. They are also composed of up to 4 major facilitator superfamily transporters, and transcription factors probably involved in the regulation of the expression of those clusters. The chain is Malformin synthetase mlfA from Aspergillus brasiliensis (strain CBS 101740 / IMI 381727 / IBT 21946).